A 366-amino-acid chain; its full sequence is tRNA-specific 2-thiouridylase MnmA (366 aa).

Residues 6–13 (AMSGGVDS) and leucine 32 contribute to the ATP site. Cysteine 101 functions as the Nucleophile in the catalytic mechanism. A disulfide bridge links cysteine 101 with cysteine 199. Position 125 (glycine 125) interacts with ATP. The segment at 148–150 (KDQ) is interaction with tRNA. The Cysteine persulfide intermediate role is filled by cysteine 199.

The protein belongs to the MnmA/TRMU family.

It is found in the cytoplasm. It catalyses the reaction S-sulfanyl-L-cysteinyl-[protein] + uridine(34) in tRNA + AH2 + ATP = 2-thiouridine(34) in tRNA + L-cysteinyl-[protein] + A + AMP + diphosphate + H(+). Functionally, catalyzes the 2-thiolation of uridine at the wobble position (U34) of tRNA, leading to the formation of s(2)U34. The polypeptide is tRNA-specific 2-thiouridylase MnmA (Leifsonia xyli subsp. xyli (strain CTCB07)).